The primary structure comprises 180 residues: NAD(P)H-quinone oxidoreductase subunit I, chloroplastic (180 aa).

2 4Fe-4S ferredoxin-type domains span residues 55–84 and 95–124; these read GRIH…VDWK and LNYS…MTEE. Residues Cys-64, Cys-67, Cys-70, Cys-74, Cys-104, Cys-107, Cys-110, and Cys-114 each coordinate [4Fe-4S] cluster.

This sequence belongs to the complex I 23 kDa subunit family. NDH is composed of at least 16 different subunits, 5 of which are encoded in the nucleus. [4Fe-4S] cluster serves as cofactor.

The protein localises to the plastid. Its subcellular location is the chloroplast thylakoid membrane. It catalyses the reaction a plastoquinone + NADH + (n+1) H(+)(in) = a plastoquinol + NAD(+) + n H(+)(out). The enzyme catalyses a plastoquinone + NADPH + (n+1) H(+)(in) = a plastoquinol + NADP(+) + n H(+)(out). NDH shuttles electrons from NAD(P)H:plastoquinone, via FMN and iron-sulfur (Fe-S) centers, to quinones in the photosynthetic chain and possibly in a chloroplast respiratory chain. The immediate electron acceptor for the enzyme in this species is believed to be plastoquinone. Couples the redox reaction to proton translocation, and thus conserves the redox energy in a proton gradient. This is NAD(P)H-quinone oxidoreductase subunit I, chloroplastic from Nandina domestica (Heavenly bamboo).